Here is a 97-residue protein sequence, read N- to C-terminus: Large ribosomal subunit protein eL21 (97 aa).

This sequence belongs to the eukaryotic ribosomal protein eL21 family.

The sequence is that of Large ribosomal subunit protein eL21 from Methanococcus aeolicus (strain ATCC BAA-1280 / DSM 17508 / OCM 812 / Nankai-3).